The chain runs to 372 residues: N-acetyllactosaminide beta-1,3-N-acetylglucosaminyltransferase 3 (372 aa).

Topologically, residues 1 to 10 (MKYLRHRRPN) are cytoplasmic. A helical; Signal-anchor for type II membrane protein transmembrane segment spans residues 11-31 (ATLILAIGAFTLLLFSLLVSP). The Lumenal portion of the chain corresponds to 32–372 (PTCKVQEQPP…LTCGNQTQIY (341 aa)). N-linked (GlcNAc...) asparagine glycosylation is found at N64, N184, N202, N362, and N367.

Belongs to the glycosyltransferase 31 family. Expressed in colon, jejunum, stomach, esophagus, placenta and trachea.

It localises to the golgi apparatus membrane. It catalyses the reaction a 3-O-{beta-D-galactosyl-(1-&gt;3)-[N-acetyl-beta-D-glucosaminyl-(1-&gt;6)]-N-acetyl-alpha-D-galactosaminyl}-L-threonyl-[protein] + UDP-N-acetyl-alpha-D-glucosamine = 3-O-{beta-D-GlcNAc-(1-&gt;3)-beta-D-Gal-(1-&gt;3)-[beta-D-GlcNAc-(1-&gt;6)]-alpha-D-GalNAc}-L-threonyl-[protein] + UDP + H(+). It carries out the reaction 3-O-{beta-D-galactosyl-(1-&gt;3)-[N-acetyl-beta-D-glucosaminyl-(1-&gt;6)]-N-acetyl-alpha-D-galactosaminyl}-L-seryl-[protein] + UDP-N-acetyl-alpha-D-glucosamine = 3-O-{beta-D-GlcNAc-(1-&gt;3)-beta-D-Gal-(1-&gt;3)-[beta-D-GlcNAc-(1-&gt;6)]-alpha-D-GalNAc}-L-seryl-[protein] + UDP + H(+). The catalysed reaction is a beta-D-galactosyl-(1-&gt;4)-N-acetyl-beta-D-glucosaminyl derivative + UDP-N-acetyl-alpha-D-glucosamine = an N-acetyl-beta-D-glucosaminyl-(1-&gt;3)-beta-D-galactosyl-(1-&gt;4)-N-acetyl-beta-D-glucosaminyl derivative + UDP + H(+). Its pathway is protein modification; protein glycosylation. In terms of biological role, beta-1,3-N-acetylglucosaminyltransferase involved in the synthesis of poly-N-acetyllactosamine. Has activity for type 2 oligosaccharides. Also acts as a core1-1,3-N-acetylglucosaminyltransferase (Core1-beta3GlcNAcT) to form the 6-sulfo sialyl Lewis x on extended core1 O-glycans. The sequence is that of N-acetyllactosaminide beta-1,3-N-acetylglucosaminyltransferase 3 (B3GNT3) from Homo sapiens (Human).